A 303-amino-acid polypeptide reads, in one-letter code: Inosose dehydratase (303 aa).

This sequence belongs to the IolE/MocC family. Glutathione serves as cofactor. Co(2+) is required as a cofactor. The cofactor is Mn(2+).

The enzyme catalyses scyllo-inosose = 3D-3,5/4-trihydroxycyclohexane-1,2-dione + H2O. It functions in the pathway polyol metabolism; myo-inositol degradation into acetyl-CoA; acetyl-CoA from myo-inositol: step 2/7. Its function is as follows. Catalyzes the dehydration of inosose (2-keto-myo-inositol, 2KMI or 2,4,6/3,5-pentahydroxycyclohexanone) to 3D-(3,5/4)-trihydroxycyclohexane-1,2-dione (D-2,3-diketo-4-deoxy-epi-inositol). The chain is Inosose dehydratase from Halalkalibacterium halodurans (strain ATCC BAA-125 / DSM 18197 / FERM 7344 / JCM 9153 / C-125) (Bacillus halodurans).